The chain runs to 238 residues: Probable transcriptional regulatory protein YeeN (238 aa).

It belongs to the TACO1 family. YeeN subfamily.

Its subcellular location is the cytoplasm. This chain is Probable transcriptional regulatory protein YeeN, found in Shigella sonnei (strain Ss046).